Here is a 494-residue protein sequence, read N- to C-terminus: Probable cytochrome P450 515A1 (494 aa).

A helical transmembrane segment spans residues 1-21 (MILGIILGLFIYIYLINIKFF). Heme is bound at residue C440.

The protein belongs to the cytochrome P450 family. Heme is required as a cofactor.

Its subcellular location is the membrane. The sequence is that of Probable cytochrome P450 515A1 (cyp515A1) from Dictyostelium discoideum (Social amoeba).